The primary structure comprises 206 residues: Putative amino-acid transporter YggA (206 aa).

Helical transmembrane passes span Met1–Ala21, Leu37–Gly57, Ser65–Ile85, Leu116–Phe136, Phe148–Ala168, and Thr185–Ala205.

This sequence belongs to the LysE/ArgO transporter (TC 2.A.75) family.

The protein localises to the cell membrane. The polypeptide is Putative amino-acid transporter YggA (yggA) (Aeromonas salmonicida).